The primary structure comprises 108 residues: uncharacterized protein (108 aa).

Residues Leu64–Ile84 traverse the membrane as a helical segment.

Its subcellular location is the membrane. This is an uncharacterized protein from Schizosaccharomyces pombe (strain 972 / ATCC 24843) (Fission yeast).